The primary structure comprises 434 residues: Nicotinate phosphoribosyltransferase (434 aa).

The residue at position 242 (H242) is a Phosphohistidine; by autocatalysis.

It belongs to the NAPRTase family. Transiently phosphorylated on a His residue during the reaction cycle. Phosphorylation strongly increases the affinity for substrates and increases the rate of nicotinate D-ribonucleotide production. Dephosphorylation regenerates the low-affinity form of the enzyme, leading to product release.

It carries out the reaction nicotinate + 5-phospho-alpha-D-ribose 1-diphosphate + ATP + H2O = nicotinate beta-D-ribonucleotide + ADP + phosphate + diphosphate. The protein operates within cofactor biosynthesis; NAD(+) biosynthesis; nicotinate D-ribonucleotide from nicotinate: step 1/1. Functionally, catalyzes the synthesis of beta-nicotinate D-ribonucleotide from nicotinate and 5-phospho-D-ribose 1-phosphate at the expense of ATP. This Brucella abortus (strain S19) protein is Nicotinate phosphoribosyltransferase.